The primary structure comprises 746 residues: F-box only protein 30 (746 aa).

Residues 49-110 (EHRLLCPFER…SYSDRKSYES (62 aa)) form a TRAF-type zinc finger. 2 disordered regions span residues 222–241 (MDEE…DQDH) and 247–266 (IGAV…QAEQ). The segment covering 225 to 241 (ENNKESFQDKNLKDQDH) has biased composition (basic and acidic residues). A compositionally biased stretch (polar residues) spans 256–266 (SGTSQNAQAEQ). Serine 383 carries the post-translational modification Phosphoserine. An F-box domain is found at 611-659 (SDHLSSLPFEVLQHIAGFLDGFSLCQLACVSRLMRDVCGSLLQSRGMVI).

In terms of assembly, part of a SCF (SKP1-cullin-F-box) protein ligase complex. Interacts with SKP1, CUL1 and RBX1/ROC1. Auto-ubiquitinated. Post-translationally, may be neddylated. Neddylation may be required for E3 ligase activity, since it was observed only after purification with o-phenanthroline.

It participates in protein modification; protein ubiquitination. Functionally, substrate-recognition component of the SCF (SKP1-CUL1-F-box protein)-type E3 ubiquitin ligase complex. Required for muscle atrophy following denervation. The polypeptide is F-box only protein 30 (Fbxo30) (Mus musculus (Mouse)).